A 140-amino-acid polypeptide reads, in one-letter code: Large ribosomal subunit protein uL11 (140 aa).

The protein belongs to the universal ribosomal protein uL11 family. In terms of assembly, part of the ribosomal stalk of the 50S ribosomal subunit. Interacts with L10 and the large rRNA to form the base of the stalk. L10 forms an elongated spine to which L12 dimers bind in a sequential fashion forming a multimeric L10(L12)X complex. Post-translationally, one or more lysine residues are methylated.

Forms part of the ribosomal stalk which helps the ribosome interact with GTP-bound translation factors. The polypeptide is Large ribosomal subunit protein uL11 (Gemmatimonas aurantiaca (strain DSM 14586 / JCM 11422 / NBRC 100505 / T-27)).